Reading from the N-terminus, the 202-residue chain is Riboflavin synthase (202 aa).

Lumazine-binding repeat units lie at residues 1-101 (MFTG…MGGH) and 102-198 (LVFG…ARLA). 2,4-dihydroxypteridine-binding positions include 4–6 (GII), 47–49 (CLT), 66–68 (EAW), 105–107 (GHV), K140, 149–151 (SLT), and 163–168 (LLIRHS).

Homotrimer.

The enzyme catalyses 2 6,7-dimethyl-8-(1-D-ribityl)lumazine + H(+) = 5-amino-6-(D-ribitylamino)uracil + riboflavin. It functions in the pathway cofactor biosynthesis; riboflavin biosynthesis; riboflavin from 2-hydroxy-3-oxobutyl phosphate and 5-amino-6-(D-ribitylamino)uracil: step 2/2. With respect to regulation, is inhibited by riboflavin. Product inhibition may be the major mechanism by which RS regulates its enzymatic activity in vivo. Functionally, catalyzes the dismutation of two molecules of 6,7-dimethyl-8-ribityllumazine, resulting in the formation of riboflavin and 5-amino-6-(D-ribitylamino)uracil. The chain is Riboflavin synthase from Brucella abortus (strain 2308).